Reading from the N-terminus, the 375-residue chain is MKILVDENMPYAQQLFCQLGEVKAVPGRPLPIEELDDTDALMVRSITKVNASLLAGKPVKFVGTATAGFDHVDTAWLEQQKIAFSSAPGCNAIAVVEYVFSALMVFAEQEGFQLTDKTVGIVGVGNVGGRLAKRLRALGVNVLLCDPPRADRGDDEQFHSLETLLKQADILTFHTPLNKSGRYNSYHLINESNLDILPEGRILINASRGEVIDNAALLSALNQGKKLRVVLDVWEPEPDLSLELLNKVDIATPHIAGYTLEGKARGTTQVYEAYCDFIGQPQHVELSTLLPKPLISTISVQGELTQTLLKQLIHLVYDVRRDDAPLRKVAGIKGEFDKLRKFYPVRREWSSLQVVCDNPTTASLLNAIGFNATHK.

Positions 45 and 66 each coordinate substrate. Residues aspartate 146, threonine 175, 206–208 (ASR), and aspartate 232 each bind NAD(+). Arginine 208 is an active-site residue. Glutamate 237 is a catalytic residue. Catalysis depends on histidine 254, which acts as the Proton donor. Glycine 257 lines the NAD(+) pocket. Substrate is bound at residue tyrosine 258.

Belongs to the D-isomer specific 2-hydroxyacid dehydrogenase family. PdxB subfamily. In terms of assembly, homodimer.

The protein localises to the cytoplasm. The enzyme catalyses 4-phospho-D-erythronate + NAD(+) = (R)-3-hydroxy-2-oxo-4-phosphooxybutanoate + NADH + H(+). It participates in cofactor biosynthesis; pyridoxine 5'-phosphate biosynthesis; pyridoxine 5'-phosphate from D-erythrose 4-phosphate: step 2/5. In terms of biological role, catalyzes the oxidation of erythronate-4-phosphate to 3-hydroxy-2-oxo-4-phosphonooxybutanoate. In Proteus mirabilis (strain HI4320), this protein is Erythronate-4-phosphate dehydrogenase.